Reading from the N-terminus, the 553-residue chain is Putative transport protein YidE (553 aa).

The next 5 membrane-spanning stretches (helical) occupy residues 4–24, 28–48, 65–85, 95–115, and 158–178; these read IALTVSVLALVAVVGLWIGNI, GVGFGIGGVLFGGIIVGHFVD, FGLILFVYTIGIQVGPGFFAS, LFAVLIVIMGGLVTAILHKIF, and MSYAMAYPFGICGILLTMWLM. RCK C-terminal domains follow at residues 192–276 and 279–361; these read KHES…VIGK and DTSL…VVGN. The next 5 helical transmembrane spans lie at 371–391, 403–425, 437–457, 464–484, and 533–553; these read MLPVFIGIGLGVLLGSIPLFV, AGGPLIIALILGRIGSIGKLYWF, LGIVLFLAVVGLKSGGNFVNT, LSWIGYGIFITAIPLITVGLL, and LVMFLRIITPQLLAVIFWGIG.

The protein belongs to the AAE transporter (TC 2.A.81) family. YidE subfamily.

It is found in the cell membrane. This chain is Putative transport protein YidE, found in Salmonella arizonae (strain ATCC BAA-731 / CDC346-86 / RSK2980).